The following is a 455-amino-acid chain: Golgi pH regulator A (455 aa).

Transmembrane regions (helical) follow at residues 5–25 (IDSS…WLFF), 46–66 (VTFA…LGVL), 79–99 (LCVI…YFIV), 114–134 (CLLW…FPIL), and 150–170 (VGVI…VNCP). N180 and N243 each carry an N-linked (GlcNAc...) asparagine glycan. The next 4 helical transmembrane spans lie at 290-310 (GYFF…NIVF), 343-363 (ISFI…LITL), 378-398 (VIVL…VLLI), and 425-445 (WFDV…YLAH).

It belongs to the Golgi pH regulator (TC 1.A.38) family. Homotrimer. Interacts with RABL3; the interaction stabilizes GPR89A. In terms of tissue distribution, ubiquitous.

Its subcellular location is the golgi apparatus membrane. The catalysed reaction is iodide(out) = iodide(in). The enzyme catalyses chloride(in) = chloride(out). It carries out the reaction bromide(in) = bromide(out). It catalyses the reaction fluoride(in) = fluoride(out). Its function is as follows. Voltage-gated channel that enables the transfer of monoatomic anions such as iodide, chloride, bromide and fluoride which may function in counter-ion conductance and participates in Golgi acidification. Plays a role in lymphocyte development, probably by acting as a RABL3 effector in hematopoietic cells. The protein is Golgi pH regulator A of Homo sapiens (Human).